The primary structure comprises 165 residues: Cyclic pyranopterin monophosphate synthase (165 aa).

Residues 83-85 (FCH) and 120-121 (ME) contribute to the substrate site. The active site involves aspartate 135.

Belongs to the MoaC family. In terms of assembly, homohexamer; trimer of dimers.

It carries out the reaction (8S)-3',8-cyclo-7,8-dihydroguanosine 5'-triphosphate = cyclic pyranopterin phosphate + diphosphate. Its pathway is cofactor biosynthesis; molybdopterin biosynthesis. Functionally, catalyzes the conversion of (8S)-3',8-cyclo-7,8-dihydroguanosine 5'-triphosphate to cyclic pyranopterin monophosphate (cPMP). The polypeptide is Cyclic pyranopterin monophosphate synthase (Xanthomonas campestris pv. campestris (strain B100)).